The chain runs to 147 residues: UPF0306 protein YhbP (147 aa).

It belongs to the UPF0306 family.

This Escherichia coli O8 (strain IAI1) protein is UPF0306 protein YhbP.